A 204-amino-acid polypeptide reads, in one-letter code: Thymidylate kinase (204 aa).

10 to 17 lines the ATP pocket; that stretch reads GGDGAGKT.

It belongs to the thymidylate kinase family.

It catalyses the reaction dTMP + ATP = dTDP + ADP. Phosphorylation of dTMP to form dTDP in both de novo and salvage pathways of dTTP synthesis. This is Thymidylate kinase from Cutibacterium acnes (strain DSM 16379 / KPA171202) (Propionibacterium acnes).